The chain runs to 246 residues: Serine protease 1 (246 aa).

The signal sequence occupies residues M1 to A15. Positions F16 to K23 are cleaved as a propeptide — activation peptide. The region spanning I24–A244 is the Peptidase S1 domain. Disulfide bonds link C30–C160, C48–C64, C132–C233, C139–C206, C171–C185, and C196–C220. H63 serves as the catalytic Charge relay system. Ca(2+)-binding residues include E75, N77, V80, and E85. The active-site Charge relay system is D107. Catalysis depends on S200, which acts as the Charge relay system.

Belongs to the peptidase S1 family. In terms of assembly, interacts with SERPINA1. Ca(2+) is required as a cofactor.

The protein localises to the secreted. The protein resides in the extracellular space. It catalyses the reaction Preferential cleavage: Arg-|-Xaa, Lys-|-Xaa.. In Canis lupus familiaris (Dog), this protein is Serine protease 1.